A 346-amino-acid polypeptide reads, in one-letter code: Glucose-6-phosphatase 3 (346 aa).

Topologically, residues M1–N24 are lumenal. The helical transmembrane segment at V25 to A45 threads the bilayer. Residues A46–G54 lie on the Cytoplasmic side of the membrane. A helical membrane pass occupies residues I55–L75. The Lumenal segment spans residues F76–H114. A substrate-binding site is contributed by R79. Residue H114 is the Proton donor of the active site. Residues C115–T135 traverse the membrane as a helical segment. The Cytoplasmic segment spans residues R136 to P146. The helical transmembrane segment at S147–I164 threads the bilayer. Substrate is bound at residue R161. Topologically, residues L165 to P169 are lumenal. H167 (nucleophile) is an active-site residue. Residues H170–M186 traverse the membrane as a helical segment. Over T187–S197 the chain is Cytoplasmic. A helical transmembrane segment spans residues F198–F218. The Lumenal segment spans residues T219–D254. The chain crosses the membrane as a helical span at residues S255–V273. Residues R274–K283 are Cytoplasmic-facing. A helical transmembrane segment spans residues I284 to P304. The Lumenal portion of the chain corresponds to Q305–S307. The chain crosses the membrane as a helical span at residues L308–V328. Topologically, residues P329–S346 are cytoplasmic.

Belongs to the glucose-6-phosphatase family. Ubiquitously expressed. Highly expressed in skeletal muscle, at intermediate levels in heart, brain, placenta, kidney, colon, thymus, spleen and pancreas. Also detected in testis, prostate, ovary, liver, lung, small intestine and peripheral blood lymphocytes.

The protein resides in the endoplasmic reticulum membrane. The catalysed reaction is D-glucose 6-phosphate + H2O = D-glucose + phosphate. It functions in the pathway carbohydrate biosynthesis; gluconeogenesis. Its activity is regulated as follows. Inhibited by vanadate. In terms of biological role, hydrolyzes glucose-6-phosphate to glucose in the endoplasmic reticulum. May form with the glucose-6-phosphate transporter (SLC37A4/G6PT) a ubiquitously expressed complex responsible for glucose production through glycogenolysis and gluconeogenesis. Probably required for normal neutrophil function. The sequence is that of Glucose-6-phosphatase 3 (G6PC3) from Homo sapiens (Human).